A 778-amino-acid polypeptide reads, in one-letter code: MPISSPGTRCSSDLKDPTLQQYSAESVSTEQSLGTFEESKGSITENYVQDSSVDEHDDGNWQPMEVISLEPTHLINDIDDDNEIIEEKKETEKVEESELEPRYTRVFRDEDDDQKHQLDSEAIKLLDIADHGNEEISMDSQLEITGNILSETEKMAYAGVCRLLILKMVDKIACFTTLPWYRGECKAALEDTIMWADKTTSCIYEHLGVTVEEQKMIENLHKHSVQIDDLSKILVSAHRAQTVSSLDAVLVDEVESSDSLSSLGKEKPVQIDVRWTVLCDLFLVLISKSLYDCRSRSLLMAVGEVLDINEFDVAKFEKHIVETIQIDDTGELEAGSSANTEAVMKLRRKVSRRKKYILMGLAGIGGGLVIGLSSGLLAPIISAGIGAAFTTVGLSGVATSGFLAGGGSAALITAGGAISGAHIGTTGMAHRKADVKTFEFRPLHAQRRANVIVTVSGWMLSKEDDVRLSFATLDPIVGDIYSVFWEPEMLASAGQTMNILATEVVTQSLQQVLGSTVLVSLMGALQWPLILTKLGYLIDNPWNNSLDRAKATGQLLADMLCYRSLGVRPVTLVGYSLGARVIYYCLRELEKKKEFSIIENVYLFGTPVIFKRTSWLKAASVVSGRFVNGYKKNDWILGYLFRATSGGIGRVAGLRQIDCIPGIENIDVTNLVSGHLAYRESMPILLAAVGFEVLDEEVDLVSEPIPEPLRERQSQLLYEIEAEECQNKQKELIEKSLMQKGRSLSPKKSNAFFDSKKIREELKKVKKKYGSSFNSRWY.

3 stretches are compositionally biased toward polar residues: residues 1-11 (MPISSPGTRCS), 18-34 (TLQQYSAESVSTEQSLG), and 41-51 (GSITENYVQDS). The disordered stretch occupies residues 1–60 (MPISSPGTRCSSDLKDPTLQQYSAESVSTEQSLGTFEESKGSITENYVQDSSVDEHDDGN). 2 consecutive transmembrane segments (helical) span residues 356–381 (YILMGLAGIGGGLVIGLSSGLLAPII) and 401–423 (GFLAGGGSAALITAGGAISGAHI).

It belongs to the TMCO4 family.

The protein localises to the golgi apparatus membrane. This is an uncharacterized protein from Schizosaccharomyces pombe (strain 972 / ATCC 24843) (Fission yeast).